The following is a 751-amino-acid chain: MSNQGSRRNGPVKLRLTVLCAKNLVKKDFFRLPDSFAKVVVDGSGQCHSTDTVKNTLDPKWNQHYDLYIGKSDSITISVWNHKKIHKKQGAGFLGCVRLLSNAINRLKDTGYQRLDLCKLGPNDNDTVRGQIVVSLQSRDRIGSGGQVVDCSRLFDNDLPDGWEERRTASGRIQYLNHITRTTQWERPTRPASEYSSPGRPLSCFVDENTPITGTNGASCGQTSDPRISERRVRSQRHRNYMSRTHLHTPPDLPEGYEQRTTQQGQVYFLHTQTGVSTWHDPRVPRDLGNVNCEELGPLPPGWEIRNTATGRVYFVDHNNRTTQFTDPRLSANLHLVLNRQNQQLKEQQPPQVVSLCQLPDEVECLTVPRYKRDLVHKLKSLRQELSQQQPQAGHCRIEVSREEIFEESYRQVMKMRPKDLWKRLMIKFRGEEGLDYGGVAREWLYLLSHDMLNPYYGLFQYSRDDIYTLQINPDSAVNPEHLSYFHFVGRIMGMAVFHGHYIDGGFTLPFYKQLLGKPITLDDMESVDPDLHNSLVWILENDITGVLDHTFCVEHNAYGELIQHELKPSGKSIPVTEDTKKEYVRLYVNWRFLRGIEAQFLALQKGFNEVIPQHLLKAFDEKELELIICGLGKIDVSDWKSNTRLKHCTTDSNIVKWFWKAVESFDEERRARLLQFVTGSSRVPLQGFKALQGAAGPRLFTIHQIDASTNNLPKAHTCFNRIDIPPYETYEKLYEKLLTAIEETCGFAVE.

A C2 domain is found at 1 to 119 (MSNQGSRRNG…TGYQRLDLCK (119 aa)). A WW 1 domain is found at 157–190 (NDLPDGWEERRTASGRIQYLNHITRTTQWERPTR). Polar residues predominate over residues 214-226 (GTNGASCGQTSDP). The segment at 214 to 236 (GTNGASCGQTSDPRISERRVRSQ) is disordered. WW domains follow at residues 251–284 (PDLP…DPRV) and 297–330 (GPLP…DPRL). Residues 417–751 (RPKDLWKRLM…IEETCGFAVE (335 aa)) form the HECT domain. The Glycyl thioester intermediate role is filled by Cys719.

The protein localises to the nucleus. It is found in the cytoplasm. The protein resides in the cell membrane. Its subcellular location is the membrane raft. The enzyme catalyses S-ubiquitinyl-[E2 ubiquitin-conjugating enzyme]-L-cysteine + [acceptor protein]-L-lysine = [E2 ubiquitin-conjugating enzyme]-L-cysteine + N(6)-ubiquitinyl-[acceptor protein]-L-lysine.. The protein operates within protein modification; protein ubiquitination. Functionally, E3 ubiquitin-protein ligase which accepts ubiquitin from an E2 ubiquitin-conjugating enzyme in the form of a thioester and then directly transfers the ubiquitin to targeted substrates. In Xenopus laevis (African clawed frog), this protein is E3 ubiquitin-protein ligase SMURF2 (smurf2).